The sequence spans 65 residues: Small hydrophobic protein (65 aa).

At 1–20 (MGNTSITIEFTSKFWPYFTL) the chain is on the intravirion side. Residues 6–15 (ITIEFTSKFW) are interaction with host BCAP31. Residues 21–44 (IHMILTLISLLIIITIMIAILNKL) traverse the membrane as a helical; Signal-anchor for type II membrane protein segment. An interaction with small-molecule inhibitor region spans residues 38 to 43 (IAILNK). Over 45–65 (SEHKTFCNNTLELGQMHQINT) the chain is Virion surface. Asn52 carries N-linked (GlcNAc...) asparagine; by host glycosylation.

Belongs to the orthopneumovirus small hydrophobic protein family. Homopentamer forming a funnel-like pore. Interacts with glycoprotein G; this interaction occurs on the surface of virion particles and infected cells. Interacts with host BCAP31 (via C-terminus); this interaction is direct. In terms of processing, four species of SH have been detected in infected cell cytoplasm: a 7.5 kDa non-glycosylated form (SH0), a 13-15 kDa form that contains one or two N-linked carbohydrate side chains of the high-mannose type (SHg), a 21-30 kDa polylactosaminoglycan-modified form of the protein (SHp), and the isoform generated by alternative translational initiation. Of these different forms, SH0 is by far the most abundant protein detected during virus infection. Tyrosine phosphorylated.

The protein resides in the virion membrane. The protein localises to the host cell membrane. Its subcellular location is the host Golgi apparatus membrane. It localises to the host endoplasmic reticulum membrane. Its activity is regulated as follows. Channel activity is inhibited by copper. Also inhibited by small-molecule pyronin B. Viroporin that forms a homopentameric ion channel displaying low ion selectivity. May play a role in virus morphogenesis and pathogenicity at various stages of the viral life cycle. Accumulates at the membrane of the Golgi apparatus in infected cells and may facilitate virus release by modifying the secretory pathway. May enhance host membrane permeability and disrupt cellular ion homeostasis, which can be sensed as damage-associated molecular patterns/danger signals, triggering NLRP3 inflammasome activation and inflammatory immune response. Also inhibits host TNFA-mediated signaling pathway and may delay apoptosis, allowing time for the virus to replicate. The chain is Small hydrophobic protein from Homo sapiens (Human).